The following is a 581-amino-acid chain: Proline--tRNA ligase (581 aa).

It belongs to the class-II aminoacyl-tRNA synthetase family. ProS type 1 subfamily. Homodimer.

It localises to the cytoplasm. The enzyme catalyses tRNA(Pro) + L-proline + ATP = L-prolyl-tRNA(Pro) + AMP + diphosphate. In terms of biological role, catalyzes the attachment of proline to tRNA(Pro) in a two-step reaction: proline is first activated by ATP to form Pro-AMP and then transferred to the acceptor end of tRNA(Pro). As ProRS can inadvertently accommodate and process non-cognate amino acids such as alanine and cysteine, to avoid such errors it has two additional distinct editing activities against alanine. One activity is designated as 'pretransfer' editing and involves the tRNA(Pro)-independent hydrolysis of activated Ala-AMP. The other activity is designated 'posttransfer' editing and involves deacylation of mischarged Ala-tRNA(Pro). The misacylated Cys-tRNA(Pro) is not edited by ProRS. The sequence is that of Proline--tRNA ligase from Chlamydia trachomatis serovar D (strain ATCC VR-885 / DSM 19411 / UW-3/Cx).